Here is a 533-residue protein sequence, read N- to C-terminus: Peptide chain release factor 3 (533 aa).

Positions 9 to 284 (ARRRTFAIIS…ALCELSPPPL (276 aa)) constitute a tr-type G domain. Residues 18-25 (SHPDAGKT), 95-99 (DTPGH), and 149-152 (NKLD) contribute to the GTP site.

Belongs to the TRAFAC class translation factor GTPase superfamily. Classic translation factor GTPase family. PrfC subfamily.

The protein resides in the cytoplasm. Functionally, increases the formation of ribosomal termination complexes and stimulates activities of RF-1 and RF-2. It binds guanine nucleotides and has strong preference for UGA stop codons. It may interact directly with the ribosome. The stimulation of RF-1 and RF-2 is significantly reduced by GTP and GDP, but not by GMP. The polypeptide is Peptide chain release factor 3 (Cupriavidus taiwanensis (strain DSM 17343 / BCRC 17206 / CCUG 44338 / CIP 107171 / LMG 19424 / R1) (Ralstonia taiwanensis (strain LMG 19424))).